A 67-amino-acid chain; its full sequence is Neurotoxin Os3 (67 aa).

One can recognise an LCN-type CS-alpha/beta domain in the interval 3 to 67; that stretch reads RDGYIAQPHN…GVIVDGEKCH (65 aa). Disulfide bonds link cysteine 13-cysteine 66, cysteine 17-cysteine 39, cysteine 24-cysteine 48, and cysteine 28-cysteine 50.

Belongs to the long (4 C-C) scorpion toxin superfamily. Sodium channel inhibitor family. Alpha subfamily. As to expression, expressed by the venom gland.

It localises to the secreted. In terms of biological role, binds to sodium channels (Nav) and inhibits the inactivation of the activated channels, thereby blocking neuronal transmission. In Orthochirus scrobiculosus (Central Asian scorpion), this protein is Neurotoxin Os3.